The following is a 295-amino-acid chain: MFDETMRQPPDGEGSVQVEMDPALHIETAKVFAIYGKGGIGKSTTSSNLSAAFSKLGKRVVQIGCDPKHDSTFTLTKRLVPTVIDVLQAVHFHTEELRVEDFVYEGYNGVMCVEAGGPPAGTGCGGYVVGQTVKLLKEHHILEDADVVVFDVLGDVVCGGFATPLQHAERALVVAANDFDSIFAANRIAAAIQAKAKNYDVRLGGIIANRSVATDQIERFNARSGMRTLAHFPDLDVIRRSRLCKSTLFEMEPSPELAAVQQEYLRLAEALWEGVEPLTATPLIDREIFDLLGFD.

Residues 39–44 (GIGKST) and K68 each bind ATP. S43 serves as a coordination point for Mg(2+). [4Fe-4S] cluster-binding residues include C124 and C158. Residues 209–210 (NR) and 233–235 (PDL) each bind ATP.

It belongs to the NifH/BchL/ChlL family. As to quaternary structure, homodimer. Protochlorophyllide reductase is composed of three subunits; BchL, BchN and BchB. Requires [4Fe-4S] cluster as cofactor.

It catalyses the reaction chlorophyllide a + oxidized 2[4Fe-4S]-[ferredoxin] + 2 ADP + 2 phosphate = protochlorophyllide a + reduced 2[4Fe-4S]-[ferredoxin] + 2 ATP + 2 H2O. Its pathway is porphyrin-containing compound metabolism; bacteriochlorophyll biosynthesis (light-independent). Component of the dark-operative protochlorophyllide reductase (DPOR) that uses Mg-ATP and reduced ferredoxin to reduce ring D of protochlorophyllide (Pchlide) to form chlorophyllide a (Chlide). This reaction is light-independent. The L component serves as a unique electron donor to the NB-component of the complex, and binds Mg-ATP. The sequence is that of Light-independent protochlorophyllide reductase iron-sulfur ATP-binding protein from Rhodospirillum rubrum (strain ATCC 11170 / ATH 1.1.1 / DSM 467 / LMG 4362 / NCIMB 8255 / S1).